The chain runs to 359 residues: uncharacterized protein (359 aa).

Residues 1–15 (MSIVLAIDTATAAVT) form the signal peptide. In terms of domain architecture, N-acetyltransferase spans 212-359 (IVIGTLTPAD…DAYLMRREAQ (148 aa)).

This is an uncharacterized protein from Mycobacterium leprae (strain TN).